An 815-amino-acid chain; its full sequence is Probable AMP deaminase (815 aa).

A helical transmembrane segment spans residues 5 to 27; that stretch reads YALHLAVATLLGASFAAASAYYM. Disordered stretches follow at residues 53–116 and 144–173; these read LLDA…PVPT and LLTNGTIGSDPLPGKASQNGDTKPVPSTNM. Over residues 105-116 the composition is skewed to low complexity; that stretch reads VRPTTPRSPVPT. Positions 159-173 are enriched in polar residues; sequence ASQNGDTKPVPSTNM. Residues His-367 and His-369 each coordinate Zn(2+). Substrate-binding positions include His-369 and 438-443; that span reads KFNLKY. Position 635 (His-635) interacts with Zn(2+). Glu-638 is a substrate binding site. His-657 functions as the Proton acceptor in the catalytic mechanism. Asp-712 is a Zn(2+) binding site. 713 to 716 contributes to the substrate binding site; the sequence is DPLQ.

Belongs to the metallo-dependent hydrolases superfamily. Adenosine and AMP deaminases family. Homodimer. Zn(2+) is required as a cofactor.

The protein localises to the membrane. It carries out the reaction AMP + H2O + H(+) = IMP + NH4(+). Its pathway is purine metabolism; IMP biosynthesis via salvage pathway; IMP from AMP: step 1/1. In terms of biological role, AMP deaminase plays a critical role in energy metabolism. The sequence is that of Probable AMP deaminase (AMPD) from Oryza sativa subsp. japonica (Rice).